The following is a 356-amino-acid chain: Phospho-N-acetylmuramoyl-pentapeptide-transferase (356 aa).

10 helical membrane passes run 4–24 (ILLAGAVSMIGTLVGTRWFIH), 53–73 (GGAVIIVSVLLAYLVAHLVTW), 76–96 (PSISALLVLWLFSGLGFIGFL), 116–136 (LLGQAFVAITFAIGVMYFPDV), 152–172 (ISWLYLPVWLGIVWVILLIAG), 186–206 (LATGASTMVFGAYTVLSIWQF), 228–248 (DIAVVAIAIAGACFGFLWWNA), 253–273 (IFLGDTGSLALGGAVAGMAVV), 278–298 (LLLVIIGALFVIETVSVMLQV), and 333–353 (FWIICGLAVSAGLGIFYAEWV).

The protein belongs to the glycosyltransferase 4 family. MraY subfamily. Mg(2+) serves as cofactor.

The protein localises to the cell membrane. The catalysed reaction is UDP-N-acetyl-alpha-D-muramoyl-L-alanyl-gamma-D-glutamyl-meso-2,6-diaminopimeloyl-D-alanyl-D-alanine + di-trans,octa-cis-undecaprenyl phosphate = di-trans,octa-cis-undecaprenyl diphospho-N-acetyl-alpha-D-muramoyl-L-alanyl-D-glutamyl-meso-2,6-diaminopimeloyl-D-alanyl-D-alanine + UMP. It participates in cell wall biogenesis; peptidoglycan biosynthesis. In terms of biological role, catalyzes the initial step of the lipid cycle reactions in the biosynthesis of the cell wall peptidoglycan: transfers peptidoglycan precursor phospho-MurNAc-pentapeptide from UDP-MurNAc-pentapeptide onto the lipid carrier undecaprenyl phosphate, yielding undecaprenyl-pyrophosphoryl-MurNAc-pentapeptide, known as lipid I. The chain is Phospho-N-acetylmuramoyl-pentapeptide-transferase from Cutibacterium acnes (strain DSM 16379 / KPA171202) (Propionibacterium acnes).